A 328-amino-acid polypeptide reads, in one-letter code: Ubiquitin-conjugating enzyme E2 Z (328 aa).

In terms of domain architecture, UBC core spans Q71–V225. Catalysis depends on C160, which acts as the Glycyl thioester intermediate. The segment at R295–P328 is disordered. The span at D312 to P328 shows a compositional bias: low complexity.

This sequence belongs to the ubiquitin-conjugating enzyme family.

It localises to the cytoplasm. The protein resides in the nucleus. It catalyses the reaction S-ubiquitinyl-[E1 ubiquitin-activating enzyme]-L-cysteine + [E2 ubiquitin-conjugating enzyme]-L-cysteine = [E1 ubiquitin-activating enzyme]-L-cysteine + S-ubiquitinyl-[E2 ubiquitin-conjugating enzyme]-L-cysteine.. The protein operates within protein modification; protein ubiquitination. Its function is as follows. Catalyzes the covalent attachment of ubiquitin to other proteins. May be involved in apoptosis regulation. This is Ubiquitin-conjugating enzyme E2 Z (ube2z) from Danio rerio (Zebrafish).